The sequence spans 197 residues: MMNRVKIGTALLGLTLAGIALPALAQPQSGPQTGVVFRNTVTGEALDVSQGKEGGRDTPAVKKFLETGENLYIDDKSCLRNGESLFATSCSGCHGHLAEGKLGPGLNDNYWTYPSNTTDVGLFATIFGGANGMMGPHNENLTPDEMLQTIAWIRHLYTGPKQDAVWLNDEQKKAYTPYKQGEVIPKDAKGQCKPLDE.

An N-terminal signal peptide occupies residues 1-25; that stretch reads MMNRVKIGTALLGLTLAGIALPALA. Heme c-binding residues include Cys90, Cys93, and His94.

In terms of processing, binds 1 heme c group covalently per subunit.

It is found in the periplasm. In terms of biological role, electron acceptor for MDH. Acts in methanol oxidation. This is Cytochrome c-L (moxG) from Methylorubrum extorquens (strain ATCC 14718 / DSM 1338 / JCM 2805 / NCIMB 9133 / AM1) (Methylobacterium extorquens).